A 535-amino-acid chain; its full sequence is CTP synthase (535 aa).

Residues 1 to 267 (MTKYIFVTGG…DQIVCDHLKL (267 aa)) are amidoligase domain. Position 13 (Ser-13) interacts with CTP. Ser-13 contacts UTP. 14–19 (SLGKGI) contacts ATP. Residue Tyr-54 coordinates L-glutamine. Asp-71 lines the ATP pocket. Residues Asp-71 and Glu-141 each coordinate Mg(2+). CTP is bound by residues 148 to 150 (DIE), 188 to 193 (KTKPTQ), and Lys-224. UTP contacts are provided by residues 188 to 193 (KTKPTQ) and Lys-224. Positions 292-534 (RIALVGKYVE…VQASITNKES (243 aa)) constitute a Glutamine amidotransferase type-1 domain. L-glutamine is bound at residue Gly-354. The active-site Nucleophile; for glutamine hydrolysis is Cys-381. L-glutamine contacts are provided by residues 382-385 (LGMQ), Glu-405, and Arg-462. Catalysis depends on residues His-507 and Glu-509.

It belongs to the CTP synthase family. In terms of assembly, homotetramer.

It catalyses the reaction UTP + L-glutamine + ATP + H2O = CTP + L-glutamate + ADP + phosphate + 2 H(+). The catalysed reaction is L-glutamine + H2O = L-glutamate + NH4(+). It carries out the reaction UTP + NH4(+) + ATP = CTP + ADP + phosphate + 2 H(+). The protein operates within pyrimidine metabolism; CTP biosynthesis via de novo pathway; CTP from UDP: step 2/2. With respect to regulation, allosterically activated by GTP, when glutamine is the substrate; GTP has no effect on the reaction when ammonia is the substrate. The allosteric effector GTP functions by stabilizing the protein conformation that binds the tetrahedral intermediate(s) formed during glutamine hydrolysis. Inhibited by the product CTP, via allosteric rather than competitive inhibition. In terms of biological role, catalyzes the ATP-dependent amination of UTP to CTP with either L-glutamine or ammonia as the source of nitrogen. Regulates intracellular CTP levels through interactions with the four ribonucleotide triphosphates. This is CTP synthase from Bacillus cytotoxicus (strain DSM 22905 / CIP 110041 / 391-98 / NVH 391-98).